Consider the following 548-residue polypeptide: Chaperonin GroEL (548 aa).

ATP-binding positions include 30-33 (TLGP), lysine 51, 87-91 (DGTTT), glycine 415, 479-481 (NAA), and aspartate 495.

It belongs to the chaperonin (HSP60) family. Forms a cylinder of 14 subunits composed of two heptameric rings stacked back-to-back. Interacts with the co-chaperonin GroES.

The protein localises to the cytoplasm. It carries out the reaction ATP + H2O + a folded polypeptide = ADP + phosphate + an unfolded polypeptide.. Together with its co-chaperonin GroES, plays an essential role in assisting protein folding. The GroEL-GroES system forms a nano-cage that allows encapsulation of the non-native substrate proteins and provides a physical environment optimized to promote and accelerate protein folding. This Methylibium petroleiphilum (strain ATCC BAA-1232 / LMG 22953 / PM1) protein is Chaperonin GroEL.